The primary structure comprises 156 residues: ATP synthase subunit b (156 aa).

The helical transmembrane segment at 11–31 (AIAFILFVWFCMKYVWPPLMA) threads the bilayer.

This sequence belongs to the ATPase B chain family. F-type ATPases have 2 components, F(1) - the catalytic core - and F(0) - the membrane proton channel. F(1) has five subunits: alpha(3), beta(3), gamma(1), delta(1), epsilon(1). F(0) has three main subunits: a(1), b(2) and c(10-14). The alpha and beta chains form an alternating ring which encloses part of the gamma chain. F(1) is attached to F(0) by a central stalk formed by the gamma and epsilon chains, while a peripheral stalk is formed by the delta and b chains.

It localises to the cell inner membrane. Functionally, f(1)F(0) ATP synthase produces ATP from ADP in the presence of a proton or sodium gradient. F-type ATPases consist of two structural domains, F(1) containing the extramembraneous catalytic core and F(0) containing the membrane proton channel, linked together by a central stalk and a peripheral stalk. During catalysis, ATP synthesis in the catalytic domain of F(1) is coupled via a rotary mechanism of the central stalk subunits to proton translocation. In terms of biological role, component of the F(0) channel, it forms part of the peripheral stalk, linking F(1) to F(0). The sequence is that of ATP synthase subunit b from Salmonella agona (strain SL483).